The primary structure comprises 323 residues: Probable oxidoreductase patJ (323 aa).

The disordered stretch occupies residues 291 to 323; that stretch reads DQSANGVNGHATGVEAKKKQLGDMTRRRSGAQE. A compositionally biased stretch (basic and acidic residues) spans 305-316; sequence EAKKKQLGDMTR.

The protein belongs to the oxidoreductase OpS7 family.

The protein localises to the vacuole lumen. It localises to the cytoplasmic vesicle lumen. It functions in the pathway mycotoxin biosynthesis; patulin biosynthesis. In terms of biological role, probable oxidoreductase; part of the gene cluster that mediates the biosynthesis of patulin, an acetate-derived tetraketide mycotoxin produced by several fungal species that shows antimicrobial properties against several bacteria. PatJ acts with patO in the vacuole to convert gentisyl alcohol to isoepoxydon. The pathway begins with the synthesis of 6-methylsalicylic acid by the polyketide synthase (PKS) patK via condensation of acetate and malonate units. The 6-methylsalicylic acid decarboxylase patG then catalyzes the decarboxylation of 6-methylsalicylic acid to yield m-cresol (also known as 3-methylphenol). These first reactions occur in the cytosol. The intermediate m-cresol is then transported into the endoplasmic reticulum where the cytochrome P450 monooxygenase patH converts it to m-hydroxybenzyl alcohol, which is further converted to gentisyl alcohol by the cytochrome P450 monooxygenase patI. The oxidoreductases patJ and patO further convert gentisyl alcohol to isoepoxydon in the vacuole. PatN catalyzes then the transformation of isoepoxydon into phyllostine. The cluster protein patF is responsible for the conversion from phyllostine to neopatulin whereas the alcohol dehydrogenase patD converts neopatulin to E-ascladiol. The steps between isoepoxydon and E-ascladiol occur in the cytosol, and E-ascladiol is probably secreted to the extracellular space by one of the cluster-specific transporters patC or patM. Finally, the secreted patulin synthase patE catalyzes the conversion of E-ascladiol to patulin. The protein is Probable oxidoreductase patJ of Aspergillus clavatus (strain ATCC 1007 / CBS 513.65 / DSM 816 / NCTC 3887 / NRRL 1 / QM 1276 / 107).